The primary structure comprises 70 residues: Cuticle protein 16 isoform b (70 aa).

In Limulus polyphemus (Atlantic horseshoe crab), this protein is Cuticle protein 16 isoform b.